The sequence spans 484 residues: Trigger factor (484 aa).

Positions 165–244 (GDFVQIDLTA…VQSVKERELP (80 aa)) constitute a PPIase FKBP-type domain. Residues 429–484 (DAVSEEPADADAEAVVADAPAEEAAEAPAAEEAPAEKPKKKAPAKKKASEKAADSE) are disordered. Over residues 430–440 (AVSEEPADADA) the composition is skewed to acidic residues. Over residues 475–484 (KASEKAADSE) the composition is skewed to basic and acidic residues.

It belongs to the FKBP-type PPIase family. Tig subfamily.

It localises to the cytoplasm. It carries out the reaction [protein]-peptidylproline (omega=180) = [protein]-peptidylproline (omega=0). In terms of biological role, involved in protein export. Acts as a chaperone by maintaining the newly synthesized protein in an open conformation. Functions as a peptidyl-prolyl cis-trans isomerase. This is Trigger factor from Clavibacter michiganensis subsp. michiganensis (strain NCPPB 382).